A 234-amino-acid polypeptide reads, in one-letter code: Large ribosomal subunit protein uL1 (234 aa).

Belongs to the universal ribosomal protein uL1 family. In terms of assembly, part of the 50S ribosomal subunit.

In terms of biological role, binds directly to 23S rRNA. The L1 stalk is quite mobile in the ribosome, and is involved in E site tRNA release. Its function is as follows. Protein L1 is also a translational repressor protein, it controls the translation of the L11 operon by binding to its mRNA. This chain is Large ribosomal subunit protein uL1, found in Escherichia coli (strain 55989 / EAEC).